The sequence spans 226 residues: 7-cyano-7-deazaguanine synthase (226 aa).

7–17 provides a ligand contact to ATP; that stretch reads ISGGMDSLVTT. 4 residues coordinate Zn(2+): C187, C195, C198, and C201.

Belongs to the QueC family. Zn(2+) serves as cofactor.

The enzyme catalyses 7-carboxy-7-deazaguanine + NH4(+) + ATP = 7-cyano-7-deazaguanine + ADP + phosphate + H2O + H(+). The protein operates within purine metabolism; 7-cyano-7-deazaguanine biosynthesis. Catalyzes the ATP-dependent conversion of 7-carboxy-7-deazaguanine (CDG) to 7-cyano-7-deazaguanine (preQ(0)). This chain is 7-cyano-7-deazaguanine synthase, found in Chlorobium limicola (strain DSM 245 / NBRC 103803 / 6330).